A 417-amino-acid chain; its full sequence is Trafficking protein particle complex subunit 13 (417 aa).

This sequence belongs to the TRAPPC13 family. Part of the multisubunit TRAPP (transport protein particle) complex.

The protein is Trafficking protein particle complex subunit 13 (TRAPPC13) of Pongo abelii (Sumatran orangutan).